We begin with the raw amino-acid sequence, 1068 residues long: Phosphatidylinositol 4,5-bisphosphate 3-kinase catalytic subunit alpha isoform (1068 aa).

Positions 16–105 (MPPRILVECL…QPFLKVIEPV (90 aa)) constitute a PI3K-ABD domain. The 103-residue stretch at 187 to 289 (KGQIIVVIWV…GRMPNLMLMA (103 aa)) folds into the PI3K-RBD domain. One can recognise a C2 PI3K-type domain in the interval 330–487 (INSALRIKIL…DWFSSVVKFP (158 aa)). Residues 517–694 (LARDNELREN…GLLLESYCRA (178 aa)) form the PIK helical domain. The PI3K/PI4K catalytic domain occupies 765–1051 (RLEECRIMSS…QMNDAHHGGW (287 aa)). The segment at 771–777 (IMSSAKR) is G-loop. Positions 912–920 (GIGDRHNSN) are catalytic loop. The tract at residues 931 to 957 (HIDFGHFLDHKKKKFGYKRERVPFVLT) is activation loop.

This sequence belongs to the PI3/PI4-kinase family. Heterodimer of a catalytic subunit PIK3CA and a p85 regulatory subunit (PIK3R1, PIK3R2 or PIK3R3). Interacts with IRS1 in nuclear extracts. Interacts with RUFY3. Interacts with RASD2. Interacts with APPL1. Interacts with HRAS and KRAS. Interaction with HRAS/KRAS is required for PI3K pathway signaling and cell proliferation stimulated by EGF and FGF2. Interacts with FAM83B; activates the PI3K/AKT signaling cascade.

The enzyme catalyses L-seryl-[protein] + ATP = O-phospho-L-seryl-[protein] + ADP + H(+). It catalyses the reaction a 1,2-diacyl-sn-glycero-3-phospho-(1D-myo-inositol) + ATP = a 1,2-diacyl-sn-glycero-3-phospho-(1D-myo-inositol-3-phosphate) + ADP + H(+). The catalysed reaction is a 1,2-diacyl-sn-glycero-3-phospho-(1D-myo-inositol-4,5-bisphosphate) + ATP = a 1,2-diacyl-sn-glycero-3-phospho-(1D-myo-inositol-3,4,5-trisphosphate) + ADP + H(+). It carries out the reaction 1,2-dioctanoyl-sn-glycero-3-phospho-(1D-myo-inositol-4,5-bisphosphate) + ATP = 1,2-dioctanoyl-sn-glycero-3-phospho-(1D-myo-inositol-3,4,5-trisphosphate) + ADP + H(+). The enzyme catalyses 1-octadecanoyl-2-(5Z,8Z,11Z,14Z)-eicosatetraenoyl-sn-glycero-3-phospho-1D-myo-inositol 4,5-bisphosphate + ATP = 1-octadecanoyl-2-(5Z,8Z,11Z,14Z-eicosatetraenoyl)-sn-glycero-3-phospho-(1D-myo-inositol 3,4,5-triphosphate) + ADP + H(+). Its pathway is phospholipid metabolism; phosphatidylinositol phosphate biosynthesis. In terms of biological role, phosphoinositide-3-kinase (PI3K) phosphorylates phosphatidylinositol (PI) and its phosphorylated derivatives at position 3 of the inositol ring to produce 3-phosphoinositides. Uses ATP and PtdIns(4,5)P2 (phosphatidylinositol 4,5-bisphosphate) to generate phosphatidylinositol 3,4,5-trisphosphate (PIP3). PIP3 plays a key role by recruiting PH domain-containing proteins to the membrane, including AKT1 and PDPK1, activating signaling cascades involved in cell growth, survival, proliferation, motility and morphology. Participates in cellular signaling in response to various growth factors. Involved in the activation of AKT1 upon stimulation by receptor tyrosine kinases ligands such as EGF, insulin, IGF1, VEGFA and PDGF. Involved in signaling via insulin-receptor substrate (IRS) proteins. Essential in endothelial cell migration during vascular development through VEGFA signaling, possibly by regulating RhoA activity. Required for lymphatic vasculature development, possibly by binding to RAS and by activation by EGF and FGF2, but not by PDGF. Regulates invadopodia formation through the PDPK1-AKT1 pathway. Participates in cardiomyogenesis in embryonic stem cells through a AKT1 pathway. Participates in vasculogenesis in embryonic stem cells through PDK1 and protein kinase C pathway. In addition to its lipid kinase activity, it displays a serine-protein kinase activity that results in the autophosphorylation of the p85alpha regulatory subunit as well as phosphorylation of other proteins such as 4EBP1, H-Ras, the IL-3 beta c receptor and possibly others. Plays a role in the positive regulation of phagocytosis and pinocytosis. The sequence is that of Phosphatidylinositol 4,5-bisphosphate 3-kinase catalytic subunit alpha isoform (PIK3CA) from Bos taurus (Bovine).